A 529-amino-acid polypeptide reads, in one-letter code: Cytochrome P450 monooxygenase fsoB (529 aa).

A helical membrane pass occupies residues 4–24 (WLLSLLIAGVVFAIFQLRTVG). Cys436 provides a ligand contact to heme.

Belongs to the cytochrome P450 family. The cofactor is heme.

The protein localises to the membrane. Cytochrome P450 monooxygenase; part of the gene cluster that mediates the biosynthesis of the enfumafungin-type antibiotic fuscoatroside. Four enzymes are sufficient to produce fuscoatroside: the terpene cyclase-glycosyl transferase fusion protein fsoAthe cytochrome P450 monoxygenases fsoD and fsoE, and the acetyltransferase fsoF; the cytochrome P450 monooxygenase fsoB and the glucose oxidase-like protein fsoC do not seem to play a role in biosynthesis of fuscoatroside. In Humicola fuscoatra, this protein is Cytochrome P450 monooxygenase fsoB.